A 116-amino-acid chain; its full sequence is UPF0342 protein RBAM_010030 (116 aa).

The protein belongs to the UPF0342 family.

This Bacillus velezensis (strain DSM 23117 / BGSC 10A6 / LMG 26770 / FZB42) (Bacillus amyloliquefaciens subsp. plantarum) protein is UPF0342 protein RBAM_010030.